A 97-amino-acid polypeptide reads, in one-letter code: Large ribosomal subunit protein bL27 (97 aa).

Positions 1 to 12 are excised as a propeptide; sequence MLNLNLANLQFM. The tract at residues 15-37 is disordered; it reads KKGGGSTSNGRDSQAKRLGAKAA.

The protein belongs to the bacterial ribosomal protein bL27 family. The N-terminus is cleaved by ribosomal processing cysteine protease Prp.

The chain is Large ribosomal subunit protein bL27 from Streptococcus suis (strain 98HAH33).